A 583-amino-acid chain; its full sequence is Vivapain-1 (583 aa).

Topologically, residues 1–34 are cytoplasmic; sequence MAQDIKIMNLTKSSLEALNRNQMLSKKSSRKILK. The propeptide at 1–338 is activation peptide; sequence MAQDIKIMNL…SSSGANLLAD (338 aa). A helical; Signal-anchor for type II membrane protein membrane pass occupies residues 35–55; the sequence is ICMYAILTFAMCGVVLICLTA. Residues 56–583 are Lumenal-facing; sequence MSNSDGSLTQ…IGVEVFYPIL (528 aa). Over residues 62-82 the composition is skewed to polar residues; the sequence is SLTQSGSHNQSGSLKGLSSTP. Disordered regions lie at residues 62–83 and 104–125; these read SLTQSGSHNQSGSLKGLSSTPG and PHGNRDPTGDDVEKPADAALPN. An N-linked (GlcNAc...) asparagine glycan is attached at asparagine 70. The segment covering 106–119 has biased composition (basic and acidic residues); the sequence is GNRDPTGDDVEKPA. Residues asparagine 195 and asparagine 272 are each glycosylated (N-linked (GlcNAc...) asparagine). 3 disulfides stabilise this stretch: cysteine 360–cysteine 402, cysteine 395–cysteine 435, and cysteine 420–cysteine 440. The active site involves cysteine 363. Asparagine 381 carries an N-linked (GlcNAc...) asparagine glycan. 2 N-linked (GlcNAc...) asparagine glycosylation sites follow: asparagine 486 and asparagine 494. Cysteine 489 and cysteine 572 are joined by a disulfide. Residues histidine 495 and asparagine 547 contribute to the active site.

It belongs to the peptidase C1 family.

The protein localises to the membrane. In terms of biological role, cysteine protease. The sequence is that of Vivapain-1 from Plasmodium vivax (strain Salvador I).